The sequence spans 342 residues: MENILDFTLEELKEWLISKEEKAFRAKQVFDWIYNKLIFDFNNMKNIPYKTKNLLSDNFYVGVPKVVKKLMSQDKNTYKFLFEYKDGNIIESVVMKYKHGNSICVSTQVGCRMGCKFCASTLDGVIRNLTSGEILSQIMAAQKEIGERISNVVLMGSGEPLDNFENVTKFLDLVTSDTTLNIGQRHITLSTCGIVPKIKELADKNYNITLAISLHSPEDLLRKEMMPIANKYSIKELMEACDYYINKTNRRITFEYALVKGKNDSIKEAKKLSTVLKGKLCHVNLIPVNEIKENSYEKSTLKNIESFGNILKENGIETTIRREMGADINAACGQLRRSYVSK.

E91 functions as the Proton acceptor in the catalytic mechanism. Positions Y97–D327 constitute a Radical SAM core domain. A disulfide bridge links C104 with C332. [4Fe-4S] cluster-binding residues include C111, C115, and C118. S-adenosyl-L-methionine contacts are provided by residues G158–E159, S190, S213–H215, and N289. C332 functions as the S-methylcysteine intermediate in the catalytic mechanism.

This sequence belongs to the radical SAM superfamily. RlmN family. Requires [4Fe-4S] cluster as cofactor.

It is found in the cytoplasm. It carries out the reaction adenosine(2503) in 23S rRNA + 2 reduced [2Fe-2S]-[ferredoxin] + 2 S-adenosyl-L-methionine = 2-methyladenosine(2503) in 23S rRNA + 5'-deoxyadenosine + L-methionine + 2 oxidized [2Fe-2S]-[ferredoxin] + S-adenosyl-L-homocysteine. The enzyme catalyses adenosine(37) in tRNA + 2 reduced [2Fe-2S]-[ferredoxin] + 2 S-adenosyl-L-methionine = 2-methyladenosine(37) in tRNA + 5'-deoxyadenosine + L-methionine + 2 oxidized [2Fe-2S]-[ferredoxin] + S-adenosyl-L-homocysteine. Functionally, specifically methylates position 2 of adenine 2503 in 23S rRNA and position 2 of adenine 37 in tRNAs. The sequence is that of Probable dual-specificity RNA methyltransferase RlmN from Clostridium botulinum (strain ATCC 19397 / Type A).